The following is a 369-amino-acid chain: tRNA/tmRNA (uracil-C(5))-methyltransferase (369 aa).

Positions 193, 221, 226, 242, and 302 each coordinate S-adenosyl-L-methionine. C327 serves as the catalytic Nucleophile. E361 functions as the Proton acceptor in the catalytic mechanism.

The protein belongs to the class I-like SAM-binding methyltransferase superfamily. RNA M5U methyltransferase family. TrmA subfamily.

It catalyses the reaction uridine(54) in tRNA + S-adenosyl-L-methionine = 5-methyluridine(54) in tRNA + S-adenosyl-L-homocysteine + H(+). The enzyme catalyses uridine(341) in tmRNA + S-adenosyl-L-methionine = 5-methyluridine(341) in tmRNA + S-adenosyl-L-homocysteine + H(+). Functionally, dual-specificity methyltransferase that catalyzes the formation of 5-methyluridine at position 54 (m5U54) in all tRNAs, and that of position 341 (m5U341) in tmRNA (transfer-mRNA). In Actinobacillus succinogenes (strain ATCC 55618 / DSM 22257 / CCUG 43843 / 130Z), this protein is tRNA/tmRNA (uracil-C(5))-methyltransferase.